A 153-amino-acid polypeptide reads, in one-letter code: 6,7-dimethyl-8-ribityllumazine synthase (153 aa).

Residues F22, 56–58 (AFE), and 80–82 (AVI) each bind 5-amino-6-(D-ribitylamino)uracil. 85 to 86 (ST) serves as a coordination point for (2S)-2-hydroxy-3-oxobutyl phosphate. H88 acts as the Proton donor in catalysis. Position 113 (F113) interacts with 5-amino-6-(D-ribitylamino)uracil. A (2S)-2-hydroxy-3-oxobutyl phosphate-binding site is contributed by R127.

It belongs to the DMRL synthase family.

It catalyses the reaction (2S)-2-hydroxy-3-oxobutyl phosphate + 5-amino-6-(D-ribitylamino)uracil = 6,7-dimethyl-8-(1-D-ribityl)lumazine + phosphate + 2 H2O + H(+). The protein operates within cofactor biosynthesis; riboflavin biosynthesis; riboflavin from 2-hydroxy-3-oxobutyl phosphate and 5-amino-6-(D-ribitylamino)uracil: step 1/2. Catalyzes the formation of 6,7-dimethyl-8-ribityllumazine by condensation of 5-amino-6-(D-ribitylamino)uracil with 3,4-dihydroxy-2-butanone 4-phosphate. This is the penultimate step in the biosynthesis of riboflavin. This chain is 6,7-dimethyl-8-ribityllumazine synthase, found in Fusobacterium nucleatum subsp. nucleatum (strain ATCC 25586 / DSM 15643 / BCRC 10681 / CIP 101130 / JCM 8532 / KCTC 2640 / LMG 13131 / VPI 4355).